Reading from the N-terminus, the 120-residue chain is Large ribosomal subunit protein uL18 (120 aa).

It belongs to the universal ribosomal protein uL18 family. As to quaternary structure, part of the 50S ribosomal subunit; part of the 5S rRNA/L5/L18/L25 subcomplex. Contacts the 5S and 23S rRNAs.

In terms of biological role, this is one of the proteins that bind and probably mediate the attachment of the 5S RNA into the large ribosomal subunit, where it forms part of the central protuberance. This chain is Large ribosomal subunit protein uL18, found in Rhodopseudomonas palustris (strain BisB5).